Reading from the N-terminus, the 459-residue chain is Pup--protein ligase (459 aa).

Residue E9 participates in Mg(2+) binding. R54 contributes to the ATP binding site. Y56 is a Mg(2+) binding site. The active-site Proton acceptor is D58. Position 64 (E64) interacts with Mg(2+). ATP contacts are provided by T67 and W421.

The protein belongs to the Pup ligase/Pup deamidase family. Pup-conjugating enzyme subfamily.

It catalyses the reaction ATP + [prokaryotic ubiquitin-like protein]-L-glutamate + [protein]-L-lysine = ADP + phosphate + N(6)-([prokaryotic ubiquitin-like protein]-gamma-L-glutamyl)-[protein]-L-lysine.. It functions in the pathway protein degradation; proteasomal Pup-dependent pathway. The protein operates within protein modification; protein pupylation. Catalyzes the covalent attachment of the prokaryotic ubiquitin-like protein modifier Pup to the proteasomal substrate proteins, thereby targeting them for proteasomal degradation. This tagging system is termed pupylation. The ligation reaction involves the side-chain carboxylate of the C-terminal glutamate of Pup and the side-chain amino group of a substrate lysine. The protein is Pup--protein ligase of Jonesia denitrificans (strain ATCC 14870 / DSM 20603 / BCRC 15368 / CIP 55.134 / JCM 11481 / NBRC 15587 / NCTC 10816 / Prevot 55134) (Listeria denitrificans).